The following is a 522-amino-acid chain: Cytochrome P450 monooxygenase sirB (522 aa).

The helical transmembrane segment at 22 to 42 threads the bilayer; sequence ASAILFCTLLTVFLFISQGTV. Residue Asn-191 is glycosylated (N-linked (GlcNAc...) asparagine). The helical transmembrane segment at 304 to 324 threads the bilayer; the sequence is VLHLSFAATGTVAILITHMIY. Cys-462 provides a ligand contact to heme.

The protein belongs to the cytochrome P450 family. Heme serves as cofactor.

The protein localises to the membrane. It participates in mycotoxin biosynthesis. Its function is as follows. Cytochrome P450 monooxygenase; part of the gene cluster that mediates the biosynthesis of sirodesmin PL, an epipolythiodioxopiperazine (ETP) characterized by a disulfide bridged cyclic dipeptide and that acts as a phytotoxin which is involved in the blackleg didease of canola. SirD catalyzes the O-prenylation of L-tyrosine (L-Tyr) in the presence of dimethylallyl diphosphate (DMAPP) to yield 4-O-dimethylallyl-L-Tyr, and therefore represents probably the first pathway-specific enzyme in the biosynthesis of sirodesmin PL. 4-O-dimethylallyl-L-Tyr, then undergoes condensation with L-Ser in a reaction catalyzed by the non-ribosomal peptide synthase sirP to form the diketopiperazine (DKP) backbone. Further bishydroxylation of the DKP performed by the cytochrome P450 monooxygenase sirC leads to the production of the intermediate phomamide. This step is essential to form the reactive thiol group required for toxicity of sirodesmin PL. The next steps of sirodesmin biosynthesis are not well understood yet, but some predictions could be made from intermediate compounds identification. Phomamide is converted into phomalizarine via oxidation, probably by sirT. Further oxidation, methylation (by sirM or sirN) and reduction steps convert phomalizarine to deacetyl sirodesmin. Finally, acetyltransferase sirH probably acetylates deacetyl sirodesmin to produce sirodesmin PL. The polypeptide is Cytochrome P450 monooxygenase sirB (Leptosphaeria maculans (Blackleg fungus)).